Reading from the N-terminus, the 309-residue chain is Aspartate carbamoyltransferase catalytic subunit (309 aa).

The carbamoyl phosphate site is built by arginine 55 and threonine 56. Lysine 85 contributes to the L-aspartate binding site. 3 residues coordinate carbamoyl phosphate: arginine 106, histidine 135, and glutamine 138. The L-aspartate site is built by arginine 168 and arginine 230. Residues leucine 268 and proline 269 each contribute to the carbamoyl phosphate site.

It belongs to the aspartate/ornithine carbamoyltransferase superfamily. ATCase family. Heterododecamer (2C3:3R2) of six catalytic PyrB chains organized as two trimers (C3), and six regulatory PyrI chains organized as three dimers (R2).

It catalyses the reaction carbamoyl phosphate + L-aspartate = N-carbamoyl-L-aspartate + phosphate + H(+). It participates in pyrimidine metabolism; UMP biosynthesis via de novo pathway; (S)-dihydroorotate from bicarbonate: step 2/3. Its function is as follows. Catalyzes the condensation of carbamoyl phosphate and aspartate to form carbamoyl aspartate and inorganic phosphate, the committed step in the de novo pyrimidine nucleotide biosynthesis pathway. This is Aspartate carbamoyltransferase catalytic subunit from Aliivibrio salmonicida (strain LFI1238) (Vibrio salmonicida (strain LFI1238)).